The following is a 314-amino-acid chain: Methionyl-tRNA formyltransferase (314 aa).

113-116 (SLLP) serves as a coordination point for (6S)-5,6,7,8-tetrahydrofolate.

The protein belongs to the Fmt family.

The enzyme catalyses L-methionyl-tRNA(fMet) + (6R)-10-formyltetrahydrofolate = N-formyl-L-methionyl-tRNA(fMet) + (6S)-5,6,7,8-tetrahydrofolate + H(+). In terms of biological role, attaches a formyl group to the free amino group of methionyl-tRNA(fMet). The formyl group appears to play a dual role in the initiator identity of N-formylmethionyl-tRNA by promoting its recognition by IF2 and preventing the misappropriation of this tRNA by the elongation apparatus. The chain is Methionyl-tRNA formyltransferase from Stutzerimonas stutzeri (strain A1501) (Pseudomonas stutzeri).